Reading from the N-terminus, the 208-residue chain is ER membrane protein complex subunit 8/9 homolog (208 aa).

Positions 11 to 146 (YEISQNAYIK…ERSPVMQLCV (136 aa)) constitute an MPN domain.

This sequence belongs to the EMC8/EMC9 family.

The sequence is that of ER membrane protein complex subunit 8/9 homolog (EMB2731) from Arabidopsis thaliana (Mouse-ear cress).